A 304-amino-acid chain; its full sequence is Probable casein kinase I homolog ECU03_0910 (304 aa).

Residues 8–304 form the Protein kinase domain; the sequence is IKLVQKIASG…SDSMGDLEIL (297 aa). ATP-binding positions include 14-22 and Lys-37; that span reads IASGAFGDI. The Proton acceptor role is filled by Asp-129.

The protein belongs to the protein kinase superfamily. CK1 Ser/Thr protein kinase family. Casein kinase I subfamily.

Its subcellular location is the nucleus. It catalyses the reaction L-seryl-[protein] + ATP = O-phospho-L-seryl-[protein] + ADP + H(+). The catalysed reaction is L-threonyl-[protein] + ATP = O-phospho-L-threonyl-[protein] + ADP + H(+). In terms of biological role, involved in DNA repair. May regulate the activity of protein(s) involved in double strand break repair caused by gamma rays. The protein is Probable casein kinase I homolog ECU03_0910 of Encephalitozoon cuniculi (strain GB-M1) (Microsporidian parasite).